A 590-amino-acid polypeptide reads, in one-letter code: Glutamine--tRNA ligase (590 aa).

A 'HIGH' region motif is present at residues Pro55–His65. ATP-binding positions include Glu56–Asn58 and His62–Ser68. L-glutamine is bound by residues Asp93 and Tyr238. Residues Thr257 and Arg292–Leu293 each bind ATP. The short motif at Ile299–Arg303 is the 'KMSKS' region element.

This sequence belongs to the class-I aminoacyl-tRNA synthetase family. In terms of assembly, monomer.

It is found in the cytoplasm. It catalyses the reaction tRNA(Gln) + L-glutamine + ATP = L-glutaminyl-tRNA(Gln) + AMP + diphosphate. The sequence is that of Glutamine--tRNA ligase from Polynucleobacter necessarius subsp. necessarius (strain STIR1).